The primary structure comprises 2438 residues: Highly reducing polyketide synthase ctvA (2438 aa).

One can recognise a Ketosynthase family 3 (KS3) domain in the interval 4 to 364 (MEPIAIVGTA…GTNAHVILES (361 aa)). Residues C105, H244, and H284 each act as for beta-ketoacyl synthase activity in the active site. The tract at residues 475-777 (VFTGQGAQWA…LKGPALQTLS (303 aa)) is malonyl-CoA:ACP transacylase (MAT) domain. The active-site For malonyltransferase activity is the S569. Residues 866–1001 (HPLLGSLSED…GILTVTWGSP (136 aa)) form an N-terminal hotdog fold region. The segment at 866–1153 (HPLLGSLSED…FFEGVHVSSL (288 aa)) is dehydratase (DH) domain. The PKS/mFAS DH domain maps to 866-1159 (HPLLGSLSED…VSSLVPPSAA (294 aa)). H898 acts as the Proton acceptor; for dehydratase activity in catalysis. The segment at 1018–1159 (ADVTDMEEYY…VSSLVPPSAA (142 aa)) is C-terminal hotdog fold. The active-site Proton donor; for dehydratase activity is D1074. The methyltransferase (CMet) domain stretch occupies residues 1297–1492 (ELLTQFYRDE…TGFGGIDSIT (196 aa)). Residues 2022–2193 (TYLLVGMTGA…ARGLVASVLQ (172 aa)) are ketoreductase (KR) domain. The 79-residue stretch at 2318–2396 (EVVEAGVAAK…ELAAAATALL (79 aa)) folds into the Carrier domain. An O-(pantetheine 4'-phosphoryl)serine modification is found at S2356. The segment at 2402–2438 (PGVVGDSDVGSEKDGSSDSRGDTSSSSYQVITPEESD) is disordered. The segment covering 2411–2422 (GSEKDGSSDSRG) has biased composition (basic and acidic residues).

Pantetheine 4'-phosphate is required as a cofactor.

It functions in the pathway mycotoxin biosynthesis. Its function is as follows. Highly reducing polyketide synthase (HR-PKS); part of the gene cluster that mediates the biosynthesis of citreoviridin, an inhibitor of the of F1-ATPase beta-subunit. The HR-PKS ctvA accepts acetyl-CoA as the starter unit and catalyzes eight iterations of malonyl-CoA extension and four iterations of SAM-dependent methylation at C4, C12, C14, and C16. The KR and DH domains selectively act on the first six iterations to generate the hexaene chain. In the last three iterations, the KR and DH domains terminate their functions to yield a beta,delta-diketo ester moiety, which then undergoes intramolecular cyclization to yield an alpha-pyrone intermediate. Subsequently, ctvB methylates the alpha-pyrone hydroxyl group to generate citreomontanin. In order to form the tetrahydrofuran ring with the correct stereochemistry, the terminal alkenes of citreomontanin need to undergo isomerization to yield a (17Z)-hexaene, a step that could be catalyzed by ctvC. The (17Z)-hexaene then undergoes bisepoxidation by ctvC to form a (17R,16R,15S,14R)-bisepoxide moiety. Lastly, ctvD acts as a regioselective hydrolase to form the tetrahydrofuran ring with the substituents in the correct absolute configuration, completing the biosynthesis of citreoviridin. This is Highly reducing polyketide synthase ctvA from Aspergillus terreus (strain NIH 2624 / FGSC A1156).